The chain runs to 404 residues: Dihydroorotase (404 aa).

Zn(2+) is bound by residues His-57 and His-59. Residues 59–61 (HLR) and Asn-91 each bind substrate. 4 residues coordinate Zn(2+): Lys-135, His-164, His-204, and Asp-272. An N6-carboxylysine modification is found at Lys-135. Asp-272 is a catalytic residue. Substrate is bound by residues His-276 and 286 to 287 (AG).

Belongs to the metallo-dependent hydrolases superfamily. DHOase family. Class I DHOase subfamily. Zn(2+) is required as a cofactor.

It carries out the reaction (S)-dihydroorotate + H2O = N-carbamoyl-L-aspartate + H(+). It functions in the pathway pyrimidine metabolism; UMP biosynthesis via de novo pathway; (S)-dihydroorotate from bicarbonate: step 3/3. Catalyzes the reversible cyclization of carbamoyl aspartate to dihydroorotate. The polypeptide is Dihydroorotase (Pyrococcus abyssi (strain GE5 / Orsay)).